We begin with the raw amino-acid sequence, 463 residues long: Type I restriction enzyme StySPI specificity subunit (463 aa).

This sequence belongs to the type-I restriction system S methylase family. The type I restriction/modification system is composed of three polypeptides R, M and S; the restriction enzyme has stoichiometry R(2)M(2)S(1) while the methyltransferase is M(2)S(1).

Its function is as follows. The specificity (S) subunit of a type I restriction enzyme; this subunit dictates DNA sequence specificity. The M and S subunits together form a methyltransferase (MTase) that methylates A-2 on the top strand and A-3 on the bottom strand of the sequence 5'-AACN(6)GTRC-3'. In the presence of the R subunit the complex can also act as an endonuclease, binding to the same target sequence but cutting the DNA some distance from this site. Whether the DNA is cut or modified depends on the methylation state of the target sequence. When the target site is unmodified, the DNA is cut. When the target site is hemimethylated, the complex acts as a maintenance MTase modifying the DNA so that both strands become methylated. After locating a non-methylated recognition site, the enzyme complex serves as a molecular motor that translocates DNA in an ATP-dependent manner until a collision occurs that triggers cleavage. This is Type I restriction enzyme StySPI specificity subunit from Salmonella potsdam.